A 199-amino-acid chain; its full sequence is Probable GTP-binding protein EngB (199 aa).

An EngB-type G domain is found at 28 to 199; sequence DLPEIALAGR…DSWDAILEQV (172 aa). Residues 36 to 43, 63 to 67, 81 to 84, 148 to 151, and 180 to 182 contribute to the GTP site; these read GRSNVGKS, GKTQL, DVPG, TKAD, and FSS. Positions 43 and 65 each coordinate Mg(2+).

Belongs to the TRAFAC class TrmE-Era-EngA-EngB-Septin-like GTPase superfamily. EngB GTPase family. It depends on Mg(2+) as a cofactor.

Necessary for normal cell division and for the maintenance of normal septation. The chain is Probable GTP-binding protein EngB from Streptococcus pyogenes serotype M28 (strain MGAS6180).